We begin with the raw amino-acid sequence, 564 residues long: Juvenile hormone esterase (564 aa).

The signal sequence occupies residues 1–19 (MTSHVLALAFLLHACTALA). A glycan (N-linked (GlcNAc...) asparagine) is linked at asparagine 81. A disulfide bridge connects residues cysteine 89 and cysteine 109. The N-linked (GlcNAc...) asparagine glycan is linked to asparagine 180. Catalysis depends on serine 220, which acts as the Acyl-ester intermediate. Residue glutamate 351 is the Charge relay system of the active site. Asparagine 402 carries an N-linked (GlcNAc...) asparagine glycan. Residue histidine 465 is the Charge relay system of the active site. The N-linked (GlcNAc...) asparagine glycan is linked to asparagine 515.

It belongs to the type-B carboxylesterase/lipase family.

The catalysed reaction is juvenile hormone I + H2O = juvenile hormone I carboxylate + methanol + H(+). The enzyme catalyses juvenile hormone III + H2O = juvenile hormone III carboxylate + methanol + H(+). In terms of biological role, JH esterase plays a crucial role in the decrease of JH activity in lepidopteran insects, by hydrolyzing the methyl ester of JH. It is also involved in the transport of JH. The polypeptide is Juvenile hormone esterase (Heliothis virescens (Tobacco budworm moth)).